The chain runs to 168 residues: Photosystem I assembly protein Ycf3 (168 aa).

3 TPR repeats span residues 35–68, 72–105, and 120–153; these read AFTYYRDGMSAQSEGNYAEALQNYYEAMRLEMDP, SYILYNIGLIHTSNGEHTKALEYYFRALERNPFL, and GEQAIRQGDSEIAEAWFDQAAEYWKQAIALTPGN.

Belongs to the Ycf3 family.

It localises to the plastid. The protein localises to the chloroplast thylakoid membrane. Its function is as follows. Essential for the assembly of the photosystem I (PSI) complex. May act as a chaperone-like factor to guide the assembly of the PSI subunits. The protein is Photosystem I assembly protein Ycf3 of Pelargonium hortorum (Common geranium).